The chain runs to 821 residues: DNA ligase (821 aa).

Residues 33–37 (DVDYD), 82–83 (SL), and glutamate 113 contribute to the NAD(+) site. Catalysis depends on lysine 115, which acts as the N6-AMP-lysine intermediate. NAD(+) is bound by residues arginine 136, glutamate 173, lysine 290, and lysine 314. Residues cysteine 408, cysteine 411, cysteine 426, and cysteine 432 each contribute to the Zn(2+) site. Residues 741–821 (IVAGPLDGQT…RLLAYLAEHE (81 aa)) enclose the BRCT domain.

Belongs to the NAD-dependent DNA ligase family. LigA subfamily. It depends on Mg(2+) as a cofactor. Mn(2+) serves as cofactor.

The catalysed reaction is NAD(+) + (deoxyribonucleotide)n-3'-hydroxyl + 5'-phospho-(deoxyribonucleotide)m = (deoxyribonucleotide)n+m + AMP + beta-nicotinamide D-nucleotide.. Its function is as follows. DNA ligase that catalyzes the formation of phosphodiester linkages between 5'-phosphoryl and 3'-hydroxyl groups in double-stranded DNA using NAD as a coenzyme and as the energy source for the reaction. It is essential for DNA replication and repair of damaged DNA. In Stenotrophomonas maltophilia (strain K279a), this protein is DNA ligase.